The chain runs to 59 residues: Protein translocase subunit SecE (59 aa).

Residues 35–55 (IVAIGIAIIGVVGFIIVLIGE) form a helical membrane-spanning segment.

Belongs to the SecE/SEC61-gamma family. Component of the Sec protein translocase complex. Heterotrimer consisting of SecY (alpha), SecG (beta) and SecE (gamma) subunits. The heterotrimers can form oligomers, although 1 heterotrimer is thought to be able to translocate proteins. Interacts with the ribosome. May interact with SecDF, and other proteins may be involved.

It localises to the cell membrane. Its function is as follows. Essential subunit of the Sec protein translocation channel SecYEG. Clamps together the 2 halves of SecY. May contact the channel plug during translocation. The sequence is that of Protein translocase subunit SecE from Methanobrevibacter smithii (strain ATCC 35061 / DSM 861 / OCM 144 / PS).